Consider the following 106-residue polypeptide: ATP-dependent Clp protease adapter protein ClpS (106 aa).

This sequence belongs to the ClpS family. As to quaternary structure, binds to the N-terminal domain of the chaperone ClpA.

Involved in the modulation of the specificity of the ClpAP-mediated ATP-dependent protein degradation. This chain is ATP-dependent Clp protease adapter protein ClpS, found in Sodalis glossinidius (strain morsitans).